A 58-amino-acid chain; its full sequence is Small ribosomal subunit protein bS21C (58 aa).

The interval 38–58 (YEKPSLRRKRKAEAARKGGRY) is disordered. A compositionally biased stretch (basic and acidic residues) spans 49–58 (AEAARKGGRY).

This sequence belongs to the bacterial ribosomal protein bS21 family.

In Nostoc sp. (strain PCC 7120 / SAG 25.82 / UTEX 2576), this protein is Small ribosomal subunit protein bS21C (rpsU3).